Consider the following 446-residue polypeptide: Alpha-1,6-mannosyl-glycoprotein 2-beta-N-acetylglucosaminyltransferase (446 aa).

Residues 1–9 lie on the Cytoplasmic side of the membrane; it reads MRFRIYKRK. A helical; Signal-anchor for type II membrane protein membrane pass occupies residues 10 to 29; that stretch reads VLILTFVVAACGFVLWSSNG. The Lumenal portion of the chain corresponds to 30-446; the sequence is RQRKNEALAP…ELCKSYRRLQ (417 aa). N-linked (GlcNAc...) asparagine glycosylation is found at N69 and N86. Residues 123–127 and D154 contribute to the substrate site; that span reads QVHNR. An intrachain disulfide couples C196 to C210. 229–233 lines the substrate pocket; sequence QTKHH. D261 serves as a coordination point for Mn(2+). A disulfide bridge links C283 with C286. Position 298 (R298) interacts with substrate. Disulfide bonds link C334–C357, C339–C439, and C378–C386. H374 lines the Mn(2+) pocket.

This sequence belongs to the glycosyltransferase 16 (GT16) protein family. As to quaternary structure, homodimer. Mn(2+) is required as a cofactor.

It is found in the golgi apparatus membrane. It catalyses the reaction an N(4)-{beta-D-GlcNAc-(1-&gt;2)-alpha-D-Man-(1-&gt;3)-[alpha-D-Man-(1-&gt;6)]-beta-D-Man-(1-&gt;4)-beta-D-GlcNAc-(1-&gt;4)-beta-D-GlcNAc}-L-asparaginyl-[protein] + UDP-N-acetyl-alpha-D-glucosamine = N(4)-{beta-D-GlcNAc-(1-&gt;2)-alpha-D-Man-(1-&gt;3)-[beta-D-GlcNAc-(1-&gt;2)-alpha-D-Man-(1-&gt;6)]-beta-D-Man-(1-&gt;4)-beta-D-GlcNAc-(1-&gt;4)-beta-D-GlcNAc}-L-asparaginyl-[protein] + UDP + H(+). It functions in the pathway protein modification; protein glycosylation. In terms of biological role, plays an essential role in protein N-glycosylation. Catalyzes the transfer of N-acetylglucosamine (GlcNAc) onto the free terminal mannose moiety in the core structure of the nascent N-linked glycan chain, giving rise to the second branch in complex glycans. This chain is Alpha-1,6-mannosyl-glycoprotein 2-beta-N-acetylglucosaminyltransferase (MGAT2), found in Sus scrofa (Pig).